A 67-amino-acid chain; its full sequence is MTVTGQVKWFNNEKGFGFIEVPGENDVFVHFSAIETDGFKSLEEGQKVSFEIEDGNRGPQAKNVIKL.

Residues 5–64 form the CSD domain; sequence GQVKWFNNEKGFGFIEVPGENDVFVHFSAIETDGFKSLEEGQKVSFEIEDGNRGPQAKNV.

As to quaternary structure, homodimer.

The protein resides in the cytoplasm. Functionally, can bind to ATTGG and CCAAT motifs (Y-box motifs) of single-stranded oligonucleotides. The chain is Major cold shock protein CspA (cspA) from Bacillus cereus.